The following is a 415-amino-acid chain: MGFDHRMETDQPPVVTATLLVPLQNGSCVEAAEALLPHGLMELHEEHSWMSNRTDLQYELNPGEVATASIFFGALWLFSIFGNSLVCLVIHRSRRTQSTTNYFVVSMACADLLISVASTPFVVLQFTTGRWTLGSAMCKVVRYFQYLTPGVQIYVLLSICIDRFYTIVYPLSFKVSREKAKRMIAASWILDAAFVTPVFFFYGSNWDSHCNYFLPPSWEGTAYTVIHFLVGFVIPSVLIILFYQKVIKYIWRIGTDGRTLRRTMNIVPRTKVKTVKMFLLLNLVFLFSWLPFHVAQLWHPHEQDYRKSSLVFTAVTWVSFSSSASKPTLYSIYNANFRRGMKETFCMSSMKCYRSNAYTITTSSRMAKRNYVGISEIPPVSRTITKDSIYDSFDREAREKKLAWPINSNPPNTFV.

Residues 1–69 (MGFDHRMETD…LNPGEVATAS (69 aa)) lie on the Extracellular side of the membrane. Asn25 and Asn52 each carry an N-linked (GlcNAc...) asparagine glycan. Residues 70-90 (IFFGALWLFSIFGNSLVCLVI) traverse the membrane as a helical segment. Residues 91–102 (HRSRRTQSTTNY) are Cytoplasmic-facing. Residues 103 to 123 (FVVSMACADLLISVASTPFVV) traverse the membrane as a helical segment. At 124-152 (LQFTTGRWTLGSAMCKVVRYFQYLTPGVQ) the chain is on the extracellular side. Cys138 and Cys210 are disulfide-bonded. The chain crosses the membrane as a helical span at residues 153–173 (IYVLLSICIDRFYTIVYPLSF). At 174-182 (KVSREKAKR) the chain is on the cytoplasmic side. The chain crosses the membrane as a helical span at residues 183–203 (MIAASWILDAAFVTPVFFFYG). The Extracellular portion of the chain corresponds to 204–221 (SNWDSHCNYFLPPSWEGT). Residues 222-242 (AYTVIHFLVGFVIPSVLIILF) traverse the membrane as a helical segment. Residues 243-277 (YQKVIKYIWRIGTDGRTLRRTMNIVPRTKVKTVKM) lie on the Cytoplasmic side of the membrane. Residues 278 to 298 (FLLLNLVFLFSWLPFHVAQLW) traverse the membrane as a helical segment. Topologically, residues 299–309 (HPHEQDYRKSS) are extracellular. A helical membrane pass occupies residues 310 to 332 (LVFTAVTWVSFSSSASKPTLYSI). Residues 333-415 (YNANFRRGMK…INSNPPNTFV (83 aa)) are Cytoplasmic-facing.

The protein belongs to the G-protein coupled receptor 1 family. Abundant expression in the brain.

The protein localises to the cell membrane. G-protein coupled receptor that plays a role in the regulation of circadian rhythms and energy metabolism. Participates in maintaining proper circadian gene expression in the suprachiasmatic nucleus (SCN), the locus of the master circadian clock in the brain. May function as a coordinator of aging-associated metabolic dysfunction, stress response, DNA integrity management, and eventual senescence. Upon binding to adropin, modulates mitochondrial energy metabolism via the p44/42-PDK4 signaling pathway, influencing pyruvate dehydrogenase activity. In Rattus norvegicus (Rat), this protein is Probable G-protein coupled receptor 19 (Gpr19).